We begin with the raw amino-acid sequence, 98 residues long: Cell division topological specificity factor (98 aa).

The protein belongs to the MinE family.

Prevents the cell division inhibition by proteins MinC and MinD at internal division sites while permitting inhibition at polar sites. This ensures cell division at the proper site by restricting the formation of a division septum at the midpoint of the long axis of the cell. This chain is Cell division topological specificity factor, found in Nitrosomonas europaea (strain ATCC 19718 / CIP 103999 / KCTC 2705 / NBRC 14298).